The following is a 241-amino-acid chain: N-acetylmuramoyl-L-alanine amidase Rv3717 (241 aa).

An N-terminal signal peptide occupies residues 1–24 (MIVGVLVAAATPIISSASATPANI). The region spanning 29 to 230 (VFIDPGHNGA…KYANALVRGV (202 aa)) is the MurNAc-LAA domain. H35 contacts Zn(2+). The interval 45-69 (RQVPTGRGGTKNCQASGTSTNSGYP) is disordered. Residues 55–67 (KNCQASGTSTNSG) show a composition bias toward polar residues. An intrachain disulfide couples C57 to C105. Residues E70 and H125 each contribute to the Zn(2+) site. E200 acts as the Proton donor/acceptor in catalysis.

This sequence belongs to the N-acetylmuramoyl-L-alanine amidase 3 family. In terms of assembly, monomer. It depends on Zn(2+) as a cofactor.

The protein resides in the periplasm. The catalysed reaction is Hydrolyzes the link between N-acetylmuramoyl residues and L-amino acid residues in certain cell-wall glycopeptides.. Its pathway is cell wall degradation; peptidoglycan degradation. The structure reveals a short flexible hairpin turn that partially occludes the active site and may be involved in autoregulation. Functionally, cell-wall hydrolase that hydrolyzes the amide bond between N-acetylmuramic acid and L-alanine in cell-wall glycopeptides. Is able to hydrolyze the cell walls of several bacterial species (i.e. Paenibacillus sp., B.avium, E.coli DH5alpha, E.aerogenes, L.acidophilus, B.thuringiensis, B.pumilus, B.subtilis and E.coli W3110), thereby showing that it is a cell-wall hydrolase with broad-spectrum activity. May have a role in peptidoglycan fragment recycling. This chain is N-acetylmuramoyl-L-alanine amidase Rv3717, found in Mycobacterium tuberculosis (strain ATCC 25618 / H37Rv).